The following is a 68-amino-acid chain: Large ribosomal subunit protein bL32 (68 aa).

This sequence belongs to the bacterial ribosomal protein bL32 family.

This is Large ribosomal subunit protein bL32 from Aster yellows witches'-broom phytoplasma (strain AYWB).